Reading from the N-terminus, the 121-residue chain is Large ribosomal subunit protein eL31 (121 aa).

It belongs to the eukaryotic ribosomal protein eL31 family.

The protein is Large ribosomal subunit protein eL31 (RPL31) of Perilla frutescens (Beefsteak mint).